We begin with the raw amino-acid sequence, 282 residues long: Small ribosomal subunit protein uS2 (282 aa).

Residues 260–282 (KRRRSKVYKEEEREVVTNEDESR) are disordered. The span at 266–282 (VYKEEEREVVTNEDESR) shows a compositional bias: basic and acidic residues.

Belongs to the universal ribosomal protein uS2 family.

The sequence is that of Small ribosomal subunit protein uS2 from Wolbachia pipientis wMel.